Here is a 623-residue protein sequence, read N- to C-terminus: V-type proton ATPase catalytic subunit A (623 aa).

252-259 (GAFGCGKT) lines the ATP pocket.

Belongs to the ATPase alpha/beta chains family. V-ATPase is a heteromultimeric enzyme composed of a peripheral catalytic V1 complex (main components: subunits A, B, C, D, E, and F) attached to an integral membrane V0 proton pore complex (main component: the proteolipid protein).

The enzyme catalyses ATP + H2O + 4 H(+)(in) = ADP + phosphate + 5 H(+)(out). Its function is as follows. Catalytic subunit of the peripheral V1 complex of vacuolar ATPase. V-ATPase vacuolar ATPase is responsible for acidifying a variety of intracellular compartments in eukaryotic cells. This is V-type proton ATPase catalytic subunit A from Vigna radiata var. radiata (Mung bean).